Consider the following 150-residue polypeptide: uncharacterized protein (150 aa).

Positions 1-133 (MNDILREIGM…ISALLHRVRK (133 aa)) constitute an HTH marR-type domain. The segment at residues 47 to 70 (QEKLAEMIKVDRTTAARAIKKLEM) is a DNA-binding region (H-T-H motif).

This is an uncharacterized protein from Bacillus subtilis (strain 168).